The primary structure comprises 392 residues: Basic salivary proline-rich protein 1 (392 aa).

Residues 1–16 form the signal peptide; that stretch reads MLLILLSVALLALSSA. Gln-17 bears the Pyrrolidone carboxylic acid mark. A compositionally biased stretch (polar residues) spans 19–28; sequence LNEDVSQEES. The disordered stretch occupies residues 19-392; the sequence is LNEDVSQEES…QGGRPSRPPQ (374 aa). Residues 34–47 show a composition bias toward low complexity; the sequence is GNPQGPSPQGGNKP. At Ser-40 the chain carries Phosphoserine; alternate. Ser-40 carries O-linked (Hex) serine; alternate glycosylation. The span at 48–83 shows a compositional bias: pro residues; sequence QGPPPPPGKPQGPPPQGGNKPQGPPPPGKPQGPPPQ. 15 repeat units span residues 53-72, 73-92, 93-112, 114-133, 134-153, 154-173, 175-194, 195-214, 215-234, 236-255, 256-275, 276-295, 297-316, 317-336, and 338-357. Residues 53–357 are 15 X 20 AA approximate tandem repeats of P-P-G-K-P-Q-G-P-P-[PAQ]-Q-[GE]-[GD]-[NKS]-[KSQRN]-[PRQS]-[QS] [GPS]-[PQAR]-[PSR]; that stretch reads PPGKPQGPPP…QEGNNPQGPP (305 aa). An O-linked (HexNAc...) serine glycan is attached at Ser-87. Over residues 91-144 the composition is skewed to pro residues; it reads RSPPGKPQGPPPQGGNQPQGPPPPPGKPQGPPPQGGNKPQGPPPPGKPQGPPPQ. A Phosphoserine modification is found at Ser-92. The residue at position 150 (Ser-150) is a Phosphoserine; alternate. O-linked (Hex) serine; alternate glycosylation occurs at Ser-150. Composition is skewed to pro residues over residues 152-205, 213-243, 252-266, and 274-324; these read RSPP…PPPQ, RSPP…PQGP, QGPP…PPPQ, and QSPP…PQGP. The span at 325–334 shows a compositional bias: low complexity; it reads PAQGGSKSQS. The O-linked (HexNAc...) serine glycan is linked to Ser-330. Positions 354–392 are enriched in pro residues; sequence QGPPPPAGGNPQQPQAPPAGQPQGPPRPPQGGRPSRPPQ.

O-glycosylated. O-glycosylation on Ser-87 is prevalent in head and neck cancer patients. O-Glycosylation on Ser-330 has a 5 times prevalence in head and neck cancers. Post-translationally, proteolytically cleaved at the tripeptide Xaa-Pro-Gln, where Xaa in the P(3) position is mostly lysine. The endoprotease may be of microbial origin. In terms of processing, pyroglutamate formation occurs on terminal Gln residues of cleaved peptides. Besides on the N-terminal of mature PBR1, pyroglutamate formation found on at least Gln-58.

The protein resides in the secreted. In Homo sapiens (Human), this protein is Basic salivary proline-rich protein 1 (PRB1).